The sequence spans 429 residues: Glutamate-1-semialdehyde 2,1-aminomutase (429 aa).

An N6-(pyridoxal phosphate)lysine modification is found at lysine 266.

Belongs to the class-III pyridoxal-phosphate-dependent aminotransferase family. HemL subfamily. The cofactor is pyridoxal 5'-phosphate.

Its subcellular location is the cytoplasm. It carries out the reaction (S)-4-amino-5-oxopentanoate = 5-aminolevulinate. It participates in porphyrin-containing compound metabolism; protoporphyrin-IX biosynthesis; 5-aminolevulinate from L-glutamyl-tRNA(Glu): step 2/2. The protein is Glutamate-1-semialdehyde 2,1-aminomutase (hemL) of Aeropyrum pernix (strain ATCC 700893 / DSM 11879 / JCM 9820 / NBRC 100138 / K1).